The following is a 250-amino-acid chain: Putative inner dynein arm light chain, axonemal (250 aa).

Residues 168–250 are a coiled coil; that stretch reads MRKALQAHEE…QLEGITAPKK (83 aa).

The protein belongs to the inner dynein arm light chain family.

It localises to the cell projection. Its subcellular location is the cilium. The protein localises to the dynein axonemal particle. In terms of biological role, may play a dynamic role in flagellar motility. This chain is Putative inner dynein arm light chain, axonemal, found in Drosophila melanogaster (Fruit fly).